A 228-amino-acid polypeptide reads, in one-letter code: Vesicle transport protein SEC20 (228 aa).

The Cytoplasmic portion of the chain corresponds to 1 to 199 (MAAPQDVHVR…LITKYNRREL (199 aa)). Positions 37–90 (LSALTELNTKVKEKFQQLRHRIQDLEQLAKEQDKESEKQLLLQEVENHKKQMLS) form a coiled coil. The chain crosses the membrane as a helical; Anchor for type IV membrane protein span at residues 200–220 (TDKLLIFLALALFLATVLYIV). Over 221-228 (KKRLFPFL) the chain is Lumenal.

Belongs to the SEC20 family. In terms of assembly, component of a SNARE complex consisting of STX18, USE1L, BNIP1/SEC20L and SEC22B. Interacts directly with STX18, RINT1/TIP20L and NAPA. Interacts with ZW10 through RINT1. Interacts with BCL2. Interacts with RNF186. Interacts with RNF185. Interacts with SQSTM1; increased by 'Lys-63'-linked polyubiquitination of BNIP1. As to quaternary structure, (Microbial infection) Interacts with adenovirus E1B 19K protein; plays a role in the suppression of cell apoptosis by the viral protein. In terms of processing, polyubiquitinated. 'Lys-63'-linked polyubiquitination by RNF185 increases the interaction with the autophagy receptor SQSTM1. Undergoes 'Lys-29'- and 'Lys-63'-linked polyubiquitination by RNF186 that may regulate BNIP1 localization to the mitochondrion. Isoform 1 is highly expressed in heart, brain, liver skeletal muscle and pancreas. Isoform 3 is moderately expressed in placenta, lung and kidney. Isoform 4 is highly expressed in testis and small intestine.

Its subcellular location is the endoplasmic reticulum membrane. It is found in the mitochondrion membrane. As part of a SNARE complex may be involved in endoplasmic reticulum membranes fusion and be required for the maintenance of endoplasmic reticulum organization. Also plays a role in apoptosis. It is for instance required for endoplasmic reticulum stress-induced apoptosis. As a substrate of RNF185 interacting with SQSTM1, might also be involved in mitochondrial autophagy. The polypeptide is Vesicle transport protein SEC20 (BNIP1) (Homo sapiens (Human)).